The following is a 159-amino-acid chain: Ribosome maturation factor RimP (159 aa).

Belongs to the RimP family.

Its subcellular location is the cytoplasm. Functionally, required for maturation of 30S ribosomal subunits. The protein is Ribosome maturation factor RimP of Streptococcus agalactiae serotype III (strain NEM316).